The following is a 424-amino-acid chain: ATP-sensitive inward rectifier potassium channel 8 (424 aa).

Over 1–69 the chain is Cytoplasmic; it reads MLARKSIIPE…IFTTLVDLKW (69 aa). Residue serine 6 is modified to Phosphoserine. Residues 70–94 traverse the membrane as a helical segment; sequence RHTLVIFTMSFLCSWLLFAIMWWLV. Topologically, residues 95–126 are extracellular; the sequence is AFAHGDIYAYMEKGTMEKSGLESAVCVTNVRS. An intramembrane region (helical; Pore-forming) is located at residues 127–138; sequence FTSAFLFSIEVQ. Residues 139–145 constitute an intramembrane region (pore-forming); sequence VTIGFGG. The Selectivity filter motif lies at 140 to 145; the sequence is TIGFGG. Topologically, residues 146–154 are extracellular; sequence RMMTEECPL. A helical membrane pass occupies residues 155–176; that stretch reads AITVLILQNIVGLIINAVMLGC. The Cytoplasmic portion of the chain corresponds to 177-424; the sequence is IFMKTAQAHR…PEGNQCPSES (248 aa). The disordered stretch occupies residues 373-409; it reads ELSHQNSLRKRNSMRRNNSMRRNNSIRRNNSSLMVPK. The segment covering 387 to 404 has biased composition (low complexity); sequence RRNNSMRRNNSIRRNNSS.

It belongs to the inward rectifier-type potassium channel (TC 1.A.2.1) family. KCNJ8 subfamily. Interacts with ABCC9.

It is found in the membrane. The enzyme catalyses K(+)(in) = K(+)(out). Its function is as follows. Inward rectifier potassium channels are characterized by a greater tendency to allow potassium to flow into the cell rather than out of it. Their voltage dependence is regulated by the concentration of extracellular potassium; as external potassium is raised, the voltage range of the channel opening shifts to more positive voltages. The inward rectification is mainly due to the blockage of outward current by internal magnesium. This channel is activated by internal ATP and can be blocked by external barium. Can form a sulfonylurea-sensitive but ATP-insensitive potassium channel with ABCC9. This is ATP-sensitive inward rectifier potassium channel 8 (Kcnj8) from Mus musculus (Mouse).